The chain runs to 483 residues: Arginine/agmatine antiporter (483 aa).

12 consecutive transmembrane segments (helical) span residues 11–33, 48–70, 90–112, 127–149, 156–178, 209–228, 241–263, 293–315, 335–357, 367–389, 415–435, and 458–477; these read ILGT…IFSL, LAWM…LSII, VGFT…YAVI, GGNT…YIVL, SFVN…LITA, TMLV…VISG, ILGF…GSLF, TGLL…EIPY, APSF…VYFS, ITGV…FSLS, LWLI…LLAL, and EILK…FLFS.

The protein belongs to the amino acid-polyamine-organocation (APC) superfamily. Basic amino acid/polyamine antiporter (APA) (TC 2.A.3.2) family.

The protein localises to the cell inner membrane. Functionally, catalyzes the exchange of L-arginine for agmatine. The arginine uptake by the bacterium in the macrophage may be a virulence factor against the host innate immune response. In Chlamydia trachomatis serovar L2 (strain ATCC VR-902B / DSM 19102 / 434/Bu), this protein is Arginine/agmatine antiporter (aaxC).